Here is a 1086-residue protein sequence, read N- to C-terminus: WD repeat-containing protein 64 (1086 aa).

WD repeat units follow at residues 129-168 (RRRDVIKCIVKVPQLDLLITASQKGLITVFNSQDTSWITG), 170-199 (DYLGQLKRIVATTERTIIVWDYKAQGSSQE), 321-360 (AMPRGANSFCYCGKANVIVTGGDDKVLRLWHPNISTKPVG), 364-403 (GHMFSITEIVSNEKEQHVISLSSAKVFRVWDIQTLSVLQV), 411-448 (PGDMQIYSMVYDANHGMLITGSGVIDMYPLTRMIQDTK), 453-492 (THEREVNVTLYNKYFHQVLTVCSESVIKVWELETGLQIYQ), 498-537 (GLSIELTCAAIDESGYLFATGAYNGTVKIWDFGSGQEMKM), 560-602 (QVKQ…PYLQ), and 642-683 (IVDV…VKEI). Positions 724 to 749 (ICSSTQCDSSKGPQSSKGSKQSIHDA) are disordered. Residues 732 to 744 (SSKGPQSSKGSKQ) show a composition bias toward low complexity. WD repeat units lie at residues 765-806 (ASRK…KDML), 809-850 (TKHS…DPPH), and 863-902 (AHSLEIIQVIYVEEKQLVLTASIDGSVRIWNSTSGHYCGY). The interval 1047 to 1069 (DKVKREEAPEMTEGSRRKSLKRN) is disordered. Positions 1049–1062 (VKREEAPEMTEGSR) are enriched in basic and acidic residues.

This is WD repeat-containing protein 64 (Wdr64) from Mus musculus (Mouse).